A 68-amino-acid chain; its full sequence is uncharacterized protein (68 aa).

This is an uncharacterized protein from Bacillus subtilis (strain 168).